The following is a 428-amino-acid chain: Trigger factor (428 aa).

The 86-residue stretch at 163-248 folds into the PPIase FKBP-type domain; the sequence is KDIVTIDFEG…VKEIKAKELP (86 aa).

Belongs to the FKBP-type PPIase family. Tig subfamily.

It localises to the cytoplasm. It catalyses the reaction [protein]-peptidylproline (omega=180) = [protein]-peptidylproline (omega=0). In terms of biological role, involved in protein export. Acts as a chaperone by maintaining the newly synthesized protein in an open conformation. Functions as a peptidyl-prolyl cis-trans isomerase. This Lachnoclostridium phytofermentans (strain ATCC 700394 / DSM 18823 / ISDg) (Clostridium phytofermentans) protein is Trigger factor.